The following is a 487-amino-acid chain: Galactose-1-phosphate uridylyltransferase (487 aa).

It belongs to the galactose-1-phosphate uridylyltransferase type 2 family.

It localises to the cytoplasm. It catalyses the reaction alpha-D-galactose 1-phosphate + UDP-alpha-D-glucose = alpha-D-glucose 1-phosphate + UDP-alpha-D-galactose. It functions in the pathway carbohydrate metabolism; galactose metabolism. The chain is Galactose-1-phosphate uridylyltransferase from Lactiplantibacillus plantarum (strain ATCC BAA-793 / NCIMB 8826 / WCFS1) (Lactobacillus plantarum).